The following is a 169-amino-acid chain: Fumarase E (169 aa).

The protein belongs to the MtlR/FumE family.

The catalysed reaction is (S)-malate = fumarate + H2O. Functionally, in vitro catalyzes the addition of water to fumarate, forming malate. Cannot catalyze the reverse reaction. Cannot use the cis-isomer maleate as substrate. The sequence is that of Fumarase E from Escherichia coli (strain K12).